The chain runs to 139 residues: Nucleoside diphosphate kinase (139 aa).

ATP is bound by residues Lys10, Phe58, Arg86, Thr92, Arg103, and Asn113. The active-site Pros-phosphohistidine intermediate is His116.

The protein belongs to the NDK family. In terms of assembly, homotetramer. Requires Mg(2+) as cofactor.

The protein resides in the cytoplasm. The catalysed reaction is a 2'-deoxyribonucleoside 5'-diphosphate + ATP = a 2'-deoxyribonucleoside 5'-triphosphate + ADP. The enzyme catalyses a ribonucleoside 5'-diphosphate + ATP = a ribonucleoside 5'-triphosphate + ADP. Its function is as follows. Major role in the synthesis of nucleoside triphosphates other than ATP. The ATP gamma phosphate is transferred to the NDP beta phosphate via a ping-pong mechanism, using a phosphorylated active-site intermediate. In Nitratidesulfovibrio vulgaris (strain ATCC 29579 / DSM 644 / CCUG 34227 / NCIMB 8303 / VKM B-1760 / Hildenborough) (Desulfovibrio vulgaris), this protein is Nucleoside diphosphate kinase.